A 256-amino-acid chain; its full sequence is DNA repair protein RecO (256 aa).

It belongs to the RecO family.

Functionally, involved in DNA repair and RecF pathway recombination. The protein is DNA repair protein RecO of Rhizobium etli (strain CIAT 652).